Here is a 109-residue protein sequence, read N- to C-terminus: Nucleoid-associated protein YbaB (109 aa).

This sequence belongs to the YbaB/EbfC family. Homodimer.

It localises to the cytoplasm. The protein localises to the nucleoid. In terms of biological role, binds to DNA and alters its conformation. May be involved in regulation of gene expression, nucleoid organization and DNA protection. This Escherichia coli O8 (strain IAI1) protein is Nucleoid-associated protein YbaB.